The following is a 454-amino-acid chain: MSNTDTIVAQATPPGRGGVGILRVSGRAAAEVAQAVLGKLPKPRHADYLPFRDANGTTLDQGIALWFPGPNSFTGEDVLELQGHGGPVILDLLLKRILTLPNVRIARPGEFSERAFLNDKLDLAQAEAIADLIDASSEQAARSALNSLQGVFSTRVNQLVEALTHLRIYVEAAIDFPDEEIDFLSDGKIESQLNGVMADLDAVRAEAHQGSLLREGMKVVIAGRPNAGKSSLLNALAGREAAIVTDIAGTTRDVLREHIHIDGMPLHIIDTAGLRDASDEVERIGIERAWQEIEQADRVLFMVDGTTTQATEPEQIWPEFMARLPKTLPITVVRNKADVTGETLGIEDVNTHSLIRLSARTGDGVDTLRDHLKQSMGFTSNTEGGFLARRRHLQALELAAQHLIQGKEQLVSAYAGELLAEELRLAQQSLSEITGEFTSDDLLGRIFSSFCIGK.

(6S)-5-formyl-5,6,7,8-tetrahydrofolate is bound by residues R23, E80, and K120. Residues 216–377 (GMKVVIAGRP…LRDHLKQSMG (162 aa)) enclose the TrmE-type G domain. N226 is a K(+) binding site. GTP is bound by residues 226-231 (NAGKSS), 245-251 (TDIAGTT), 270-273 (DTAG), 335-338 (NKAD), and 358-360 (SAR). Residue S230 coordinates Mg(2+). 3 residues coordinate K(+): T245, I247, and T250. T251 contacts Mg(2+). K454 lines the (6S)-5-formyl-5,6,7,8-tetrahydrofolate pocket.

It belongs to the TRAFAC class TrmE-Era-EngA-EngB-Septin-like GTPase superfamily. TrmE GTPase family. In terms of assembly, homodimer. Heterotetramer of two MnmE and two MnmG subunits. The cofactor is K(+).

It localises to the cytoplasm. Functionally, exhibits a very high intrinsic GTPase hydrolysis rate. Involved in the addition of a carboxymethylaminomethyl (cmnm) group at the wobble position (U34) of certain tRNAs, forming tRNA-cmnm(5)s(2)U34. The protein is tRNA modification GTPase MnmE of Pectobacterium carotovorum subsp. carotovorum (strain PC1).